The primary structure comprises 385 residues: 1-deoxy-D-xylulose 5-phosphate reductoisomerase (385 aa).

6 residues coordinate NADPH: Thr11, Gly12, Ser13, Ile14, Gln39, and Asn117. Lys118 contacts 1-deoxy-D-xylulose 5-phosphate. Glu119 is a binding site for NADPH. Asp143 is a binding site for Mn(2+). The 1-deoxy-D-xylulose 5-phosphate site is built by Ser144, Glu145, Ser170, and His193. Glu145 is a Mn(2+) binding site. NADPH is bound at residue Gly199. 4 residues coordinate 1-deoxy-D-xylulose 5-phosphate: Ser206, Asn211, Lys212, and Glu215. Position 215 (Glu215) interacts with Mn(2+).

Belongs to the DXR family. Requires Mg(2+) as cofactor. Mn(2+) serves as cofactor.

It catalyses the reaction 2-C-methyl-D-erythritol 4-phosphate + NADP(+) = 1-deoxy-D-xylulose 5-phosphate + NADPH + H(+). It functions in the pathway isoprenoid biosynthesis; isopentenyl diphosphate biosynthesis via DXP pathway; isopentenyl diphosphate from 1-deoxy-D-xylulose 5-phosphate: step 1/6. In terms of biological role, catalyzes the NADPH-dependent rearrangement and reduction of 1-deoxy-D-xylulose-5-phosphate (DXP) to 2-C-methyl-D-erythritol 4-phosphate (MEP). This chain is 1-deoxy-D-xylulose 5-phosphate reductoisomerase, found in Thermomicrobium roseum (strain ATCC 27502 / DSM 5159 / P-2).